The sequence spans 493 residues: Cobyric acid synthase (493 aa).

Residues 261 to 455 (HTRIAVVAYP…LHGLFEDAAV (195 aa)) enclose the GATase cobBQ-type domain. C342 (nucleophile) is an active-site residue. H447 is a catalytic residue.

This sequence belongs to the CobB/CobQ family. CobQ subfamily.

Its pathway is cofactor biosynthesis; adenosylcobalamin biosynthesis. Functionally, catalyzes amidations at positions B, D, E, and G on adenosylcobyrinic A,C-diamide. NH(2) groups are provided by glutamine, and one molecule of ATP is hydrogenolyzed for each amidation. The sequence is that of Cobyric acid synthase from Acidovorax sp. (strain JS42).